Consider the following 126-residue polypeptide: Small ribosomal subunit protein uS13c (126 aa).

Residues 95–126 are disordered; the sequence is GLPLRGQNTRTNARTKRGIKKTMAGKKKAPRK. Over residues 107-126 the composition is skewed to basic residues; it reads ARTKRGIKKTMAGKKKAPRK.

This sequence belongs to the universal ribosomal protein uS13 family. Part of the 30S ribosomal subunit.

The protein localises to the plastid. It is found in the chloroplast. Its function is as follows. Located at the top of the head of the 30S subunit, it contacts several helices of the 16S rRNA. This chain is Small ribosomal subunit protein uS13c, found in Gracilaria tenuistipitata var. liui (Red alga).